Here is a 229-residue protein sequence, read N- to C-terminus: Ribonuclease 3 (229 aa).

Residues 5-127 form the RNase III domain; sequence LARLERKLGY…LIGAIYLDAD (123 aa). Mg(2+) is bound at residue Glu-40. Residue Asp-44 is part of the active site. Residues Asp-113 and Glu-116 each contribute to the Mg(2+) site. Glu-116 is an active-site residue. The region spanning 154–224 is the DRBM domain; sequence DPKTRLQEFL…AASALIALGV (71 aa).

It belongs to the ribonuclease III family. In terms of assembly, homodimer. Requires Mg(2+) as cofactor.

It localises to the cytoplasm. It carries out the reaction Endonucleolytic cleavage to 5'-phosphomonoester.. Digests double-stranded RNA. Involved in the processing of primary rRNA transcript to yield the immediate precursors to the large and small rRNAs (23S and 16S). Processes some mRNAs, and tRNAs when they are encoded in the rRNA operon. Processes pre-crRNA and tracrRNA of type II CRISPR loci if present in the organism. The sequence is that of Ribonuclease 3 from Pseudomonas putida (strain GB-1).